Consider the following 85-residue polypeptide: Large ribosomal subunit protein bL27 (85 aa).

The protein belongs to the bacterial ribosomal protein bL27 family.

The protein is Large ribosomal subunit protein bL27 of Cellvibrio japonicus (strain Ueda107) (Pseudomonas fluorescens subsp. cellulosa).